We begin with the raw amino-acid sequence, 1953 residues long: tRNA (32-2'-O)-methyltransferase regulator THADA (1953 aa).

A coiled-coil region spans residues E886–F918. A phosphoserine mark is found at S1015, S1024, and S1161.

The protein belongs to the THADA family. As to expression, expressed in pancreas, adrenal medulla, thyroid, adrenal cortex, testis, thymus, small intestine and stomach.

Its function is as follows. Together with methyltransferase FTSJ1, methylates the 2'-O-ribose of nucleotides at position 32 of the anticodon loop of substrate tRNAs. This is tRNA (32-2'-O)-methyltransferase regulator THADA (THADA) from Homo sapiens (Human).